The chain runs to 335 residues: Deoxyhypusine hydroxylase (335 aa).

HEAT-like PBS-type repeat units lie at residues 71 to 97, 104 to 130, 200 to 233, 238 to 264, and 271 to 298; these read LKHE…VVKD, CRHE…LRDN, QRYR…GLKD, FRHE…ALSD, and VRHE…FLND. Fe cation is bound by residues H73, E74, H106, and E107. 4 residues coordinate Fe cation: H240, E241, H273, and E274.

This sequence belongs to the deoxyhypusine hydroxylase family. Fe(2+) serves as cofactor.

It is found in the cytoplasm. The protein localises to the nucleus. It catalyses the reaction [eIF5A protein]-deoxyhypusine + AH2 + O2 = [eIF5A protein]-hypusine + A + H2O. The protein operates within protein modification; eIF5A hypusination. Its function is as follows. Catalyzes the hydroxylation of the N(6)-(4-aminobutyl)-L-lysine intermediate to form hypusine, an essential post-translational modification only found in mature eIF-5A factor. The chain is Deoxyhypusine hydroxylase (lia1) from Aspergillus clavatus (strain ATCC 1007 / CBS 513.65 / DSM 816 / NCTC 3887 / NRRL 1 / QM 1276 / 107).